Reading from the N-terminus, the 469-residue chain is Maintenance of mitochondrial morphology protein 1 (469 aa).

Over 1 to 25 (MADEVPTAVPLATPAGSSSLSFTQG) the chain is Lumenal. The chain crosses the membrane as a helical span at residues 26–46 (FLLGQLSIAILIFCFIKFFIF). Residues 47–469 (GEPPSADDRA…GMRWRGALPR (423 aa)) lie on the Cytoplasmic side of the membrane. Positions 124–363 (QPESLDWFNV…EPRFQQIVLP (240 aa)) constitute an SMP-LTD domain. The span at 266-299 (SSSPPSTTAPMPSPTSNTHRSSSPSRPASSSGAP) shows a compositional bias: low complexity. Disordered regions lie at residues 266–304 (SSSP…HRPT) and 426–469 (EAEG…ALPR). Basic and acidic residues-rich tracts occupy residues 426–439 (EAEG…EIRA) and 449–462 (ERSR…DGMR).

This sequence belongs to the MMM1 family. In terms of assembly, homodimer. Component of the ER-mitochondria encounter structure (ERMES) or MDM complex, composed of mmm1, MDM10, MDM12 and MDM34. A mmm1 homodimer associates with one molecule of MDM12 on each side in a pairwise head-to-tail manner, and the SMP-LTD domains of mmm1 and MDM12 generate a continuous hydrophobic tunnel for phospholipid trafficking.

Its subcellular location is the endoplasmic reticulum membrane. Functionally, component of the ERMES/MDM complex, which serves as a molecular tether to connect the endoplasmic reticulum (ER) and mitochondria. Components of this complex are involved in the control of mitochondrial shape and protein biogenesis, and function in nonvesicular lipid trafficking between the ER and mitochondria. The MDM12-mmm1 subcomplex functions in the major beta-barrel assembly pathway that is responsible for biogenesis of all outer membrane beta-barrel proteins, and acts in a late step after the SAM complex. The MDM10-MDM12-mmm1 subcomplex further acts in the TOM40-specific pathway after the action of the MDM12-mmm1 complex. Essential for establishing and maintaining the structure of mitochondria and maintenance of mtDNA nucleoids. This is Maintenance of mitochondrial morphology protein 1 from Pyrenophora tritici-repentis (strain Pt-1C-BFP) (Wheat tan spot fungus).